Consider the following 247-residue polypeptide: 3-deoxy-manno-octulosonate cytidylyltransferase (247 aa).

This sequence belongs to the KdsB family.

The protein localises to the cytoplasm. It catalyses the reaction 3-deoxy-alpha-D-manno-oct-2-ulosonate + CTP = CMP-3-deoxy-beta-D-manno-octulosonate + diphosphate. Its pathway is nucleotide-sugar biosynthesis; CMP-3-deoxy-D-manno-octulosonate biosynthesis; CMP-3-deoxy-D-manno-octulosonate from 3-deoxy-D-manno-octulosonate and CTP: step 1/1. It participates in bacterial outer membrane biogenesis; lipopolysaccharide biosynthesis. Its function is as follows. Activates KDO (a required 8-carbon sugar) for incorporation into bacterial lipopolysaccharide in Gram-negative bacteria. The protein is 3-deoxy-manno-octulosonate cytidylyltransferase of Methylorubrum extorquens (strain PA1) (Methylobacterium extorquens).